Reading from the N-terminus, the 82-residue chain is Small ribosomal subunit protein eS27B (82 aa).

A C4-type zinc finger spans residues 37 to 59 (CPGCLNITTVFSHAQTAVTCESC).

It belongs to the eukaryotic ribosomal protein eS27 family. In terms of assembly, component of the small ribosomal subunit (SSU). Mature yeast ribosomes consist of a small (40S) and a large (60S) subunit. The 40S small subunit contains 1 molecule of ribosomal RNA (18S rRNA) and 33 different proteins (encoded by 57 genes). The large 60S subunit contains 3 rRNA molecules (25S, 5.8S and 5S rRNA) and 46 different proteins (encoded by 81 genes). Zn(2+) is required as a cofactor. Post-translationally, the N-terminus is not modified.

It localises to the cytoplasm. In terms of biological role, component of the ribosome, a large ribonucleoprotein complex responsible for the synthesis of proteins in the cell. The small ribosomal subunit (SSU) binds messenger RNAs (mRNAs) and translates the encoded message by selecting cognate aminoacyl-transfer RNA (tRNA) molecules. The large subunit (LSU) contains the ribosomal catalytic site termed the peptidyl transferase center (PTC), which catalyzes the formation of peptide bonds, thereby polymerizing the amino acids delivered by tRNAs into a polypeptide chain. The nascent polypeptides leave the ribosome through a tunnel in the LSU and interact with protein factors that function in enzymatic processing, targeting, and the membrane insertion of nascent chains at the exit of the ribosomal tunnel. This Saccharomyces cerevisiae (strain ATCC 204508 / S288c) (Baker's yeast) protein is Small ribosomal subunit protein eS27B.